A 370-amino-acid polypeptide reads, in one-letter code: Putative F-box protein At3g10430 (370 aa).

The 47-residue stretch at methionine 1–leucine 47 folds into the F-box domain.

The protein is Putative F-box protein At3g10430 of Arabidopsis thaliana (Mouse-ear cress).